We begin with the raw amino-acid sequence, 303 residues long: Bifunctional protein FolD (303 aa).

NADP(+) contacts are provided by residues 165–167 (GRS), Ser190, and Ile231.

This sequence belongs to the tetrahydrofolate dehydrogenase/cyclohydrolase family. In terms of assembly, homodimer.

The catalysed reaction is (6R)-5,10-methylene-5,6,7,8-tetrahydrofolate + NADP(+) = (6R)-5,10-methenyltetrahydrofolate + NADPH. It carries out the reaction (6R)-5,10-methenyltetrahydrofolate + H2O = (6R)-10-formyltetrahydrofolate + H(+). It participates in one-carbon metabolism; tetrahydrofolate interconversion. In terms of biological role, catalyzes the oxidation of 5,10-methylenetetrahydrofolate to 5,10-methenyltetrahydrofolate and then the hydrolysis of 5,10-methenyltetrahydrofolate to 10-formyltetrahydrofolate. This is Bifunctional protein FolD from Prochlorococcus marinus (strain NATL2A).